Reading from the N-terminus, the 316-residue chain is HTH-type transcriptional regulator cbl (316 aa).

Positions 1 to 59 constitute an HTH lysR-type domain; that stretch reads MNFQQLKIIREAARQDYNLTEVANMLYTSQSGVSRHIRELEEELGIEIFIRRGKRLLGM. The H-T-H motif DNA-binding region spans 19 to 38; sequence LTEVANMLYTSQSGVSRHIR.

Belongs to the LysR transcriptional regulatory family.

Its function is as follows. May be an accessory regulatory protein within the cys regulon. This is HTH-type transcriptional regulator cbl (cbl) from Klebsiella aerogenes (Enterobacter aerogenes).